We begin with the raw amino-acid sequence, 307 residues long: uncharacterized protein (307 aa).

An ABC transporter domain is found at 5 to 233 (VQTNGLTKTY…NTEYIELVTP (229 aa)). 37-44 (GPNGAGKT) is an ATP binding site.

The protein belongs to the ABC transporter superfamily.

This is an uncharacterized protein from Bacillus subtilis (strain 168).